A 294-amino-acid polypeptide reads, in one-letter code: Small ribosomal subunit protein uS2 (294 aa).

Residues 232 to 245 are compositionally biased toward basic and acidic residues; that stretch reads RAAEQDKAADDKAQ. Positions 232–294 are disordered; that stretch reads RAAEQDKAAD…GSEEDGEAAN (63 aa). Over residues 246–265 the composition is skewed to low complexity; that stretch reads EQAAAEAAKPEPAAPAPAAE.

The protein belongs to the universal ribosomal protein uS2 family.

The protein is Small ribosomal subunit protein uS2 of Desulfatibacillum aliphaticivorans.